A 470-amino-acid polypeptide reads, in one-letter code: Aminodeoxychorismate synthase component 1 (470 aa).

Belongs to the anthranilate synthase component I family. Monomer. Heterodimer consisting of two non-identical subunits: a glutamine amidotransferase subunit (PabA) and a aminodeoxychorismate synthase subunit (PabB). It depends on Mg(2+) as a cofactor.

It carries out the reaction chorismate + L-glutamine = 4-amino-4-deoxychorismate + L-glutamate. Its pathway is cofactor biosynthesis; tetrahydrofolate biosynthesis; 4-aminobenzoate from chorismate: step 1/2. Functionally, part of a heterodimeric complex that catalyzes the two-step biosynthesis of 4-amino-4-deoxychorismate (ADC), a precursor of p-aminobenzoate (PABA) and tetrahydrofolate. In the first step, a glutamine amidotransferase (PabA) generates ammonia as a substrate that, along with chorismate, is used in the second step, catalyzed by aminodeoxychorismate synthase (PabB) to produce ADC. The sequence is that of Aminodeoxychorismate synthase component 1 (pabB) from Lactococcus lactis subsp. lactis (Streptococcus lactis).